Reading from the N-terminus, the 1096-residue chain is Pullulanase (1096 aa).

Positions 1-19 (MLRYTCHALFLGSLVLLSG) are cleaved as a signal peptide. A lipid anchor (N-palmitoyl cysteine) is attached at Cys20. The S-diacylglycerol cysteine moiety is linked to residue Cys20. Residues 24 to 34 (SSSSTSGSPGS) are compositionally biased toward low complexity. The interval 24–50 (SSSSTSGSPGSPGNPGNPGTPGTPDPQ) is disordered. Asp694 serves as the catalytic Nucleophile. Residue Glu723 is the Proton donor of the active site. Residues 1014–1044 (QAGRQSGQPCRRHRGGDQRRAGKPDAAGLRR) form a disordered region.

The protein belongs to the glycosyl hydrolase 13 family. In terms of assembly, homotrimer.

It localises to the cell membrane. It catalyses the reaction Hydrolysis of (1-&gt;6)-alpha-D-glucosidic linkages in pullulan, amylopectin and glycogen, and in the alpha- and beta-limit dextrins of amylopectin and glycogen.. The protein is Pullulanase (pulA) of Klebsiella aerogenes (Enterobacter aerogenes).